Consider the following 200-residue polypeptide: Charged multivesicular body protein 6 (200 aa).

The N-myristoyl glycine moiety is linked to residue Gly-2. Positions 10–145 (QSRVTEQDRA…YQRQIDELLA (136 aa)) form a coiled coil. Ser-119 is subject to Phosphoserine. Phosphothreonine is present on Thr-130. Residues 168 to 179 (MELPEVPSEPLP) carry the Type-2 MIT-interacting motif motif. Residues 168-200 (MELPEVPSEPLPDRNPEAPAKARSRQAELVAAS) form a disordered region.

The protein belongs to the SNF7 family. As to quaternary structure, probable core component of the endosomal sorting required for transport complex III (ESCRT-III). ESCRT-III components are thought to multimerize to form a flat lattice on the perimeter membrane of the endosome. Several assembly forms of ESCRT-III may exist that interact and act sequentially. Interacts with VPS4A; the interaction is direct. Interacts with VPS4B; the interaction is direct. Interacts with CHMP4A, CHMP4B and CHMP4C. Interacts with SNF8, VPS25 and VPS36. Post-translationally, ISGylated in a CHMP5-dependent manner. Isgylation weakens its interaction with VPS4A.

It is found in the endomembrane system. It localises to the endosome membrane. The protein resides in the late endosome membrane. Its subcellular location is the membrane. Probable core component of the endosomal sorting required for transport complex III (ESCRT-III) which is involved in multivesicular bodies (MVBs) formation and sorting of endosomal cargo proteins into MVBs. MVBs contain intraluminal vesicles (ILVs) that are generated by invagination and scission from the limiting membrane of the endosome and mostly are delivered to lysosomes enabling degradation of membrane proteins, such as stimulated growth factor receptors, lysosomal enzymes and lipids. The MVB pathway appears to require the sequential function of ESCRT-O, -I,-II and -III complexes. ESCRT-III proteins mostly dissociate from the invaginating membrane before the ILV is released. The ESCRT machinery also functions in topologically equivalent membrane fission events, such as the terminal stages of cytokinesis. ESCRT-III proteins are believed to mediate the necessary vesicle extrusion and/or membrane fission activities, possibly in conjunction with the AAA ATPase VPS4. In the ESCRT-III complex, it probably serves as an acceptor for the ESCRT-II complex on endosomal membranes. This Mus musculus (Mouse) protein is Charged multivesicular body protein 6 (Chmp6).